The chain runs to 443 residues: Tryptophan synthase beta chain (443 aa).

Residue lysine 110 is modified to N6-(pyridoxal phosphate)lysine.

This sequence belongs to the TrpB family. As to quaternary structure, tetramer of two alpha and two beta chains. Requires pyridoxal 5'-phosphate as cofactor.

It catalyses the reaction (1S,2R)-1-C-(indol-3-yl)glycerol 3-phosphate + L-serine = D-glyceraldehyde 3-phosphate + L-tryptophan + H2O. It participates in amino-acid biosynthesis; L-tryptophan biosynthesis; L-tryptophan from chorismate: step 5/5. The beta subunit is responsible for the synthesis of L-tryptophan from indole and L-serine. This Thermococcus onnurineus (strain NA1) protein is Tryptophan synthase beta chain.